Consider the following 491-residue polypeptide: Glutamyl-tRNA(Gln) amidotransferase subunit A (491 aa).

Catalysis depends on charge relay system residues K80 and S155. The active-site Acyl-ester intermediate is the S179.

It belongs to the amidase family. GatA subfamily. In terms of assembly, heterotrimer of A, B and C subunits.

The catalysed reaction is L-glutamyl-tRNA(Gln) + L-glutamine + ATP + H2O = L-glutaminyl-tRNA(Gln) + L-glutamate + ADP + phosphate + H(+). Allows the formation of correctly charged Gln-tRNA(Gln) through the transamidation of misacylated Glu-tRNA(Gln) in organisms which lack glutaminyl-tRNA synthetase. The reaction takes place in the presence of glutamine and ATP through an activated gamma-phospho-Glu-tRNA(Gln). This chain is Glutamyl-tRNA(Gln) amidotransferase subunit A, found in Salinispora tropica (strain ATCC BAA-916 / DSM 44818 / JCM 13857 / NBRC 105044 / CNB-440).